The chain runs to 185 residues: Ribosome-recycling factor (185 aa).

Belongs to the RRF family.

The protein localises to the cytoplasm. Functionally, responsible for the release of ribosomes from messenger RNA at the termination of protein biosynthesis. May increase the efficiency of translation by recycling ribosomes from one round of translation to another. In Buchnera aphidicola subsp. Schizaphis graminum (strain Sg), this protein is Ribosome-recycling factor.